Here is a 188-residue protein sequence, read N- to C-terminus: GTP cyclohydrolase 1 (188 aa).

Zn(2+) contacts are provided by Cys78, His81, and Cys150.

The protein belongs to the GTP cyclohydrolase I family. As to quaternary structure, toroid-shaped homodecamer, composed of two pentamers of five dimers.

It catalyses the reaction GTP + H2O = 7,8-dihydroneopterin 3'-triphosphate + formate + H(+). It participates in cofactor biosynthesis; 7,8-dihydroneopterin triphosphate biosynthesis; 7,8-dihydroneopterin triphosphate from GTP: step 1/1. This Geobacillus kaustophilus (strain HTA426) protein is GTP cyclohydrolase 1.